Here is a 2222-residue protein sequence, read N- to C-terminus: DNA polymerase epsilon catalytic subunit A (2222 aa).

The tract at residues 90–110 (ETLSSGSNGGGNSNDGERVTT) is disordered. Zn(2+)-binding residues include cysteine 2108, cysteine 2111, cysteine 2130, and cysteine 2133. Residues 2108-2133 (CEYCFFISDIDFCKAAPESIFSCVRC) form a CysA-type zinc finger. Cysteine 2164, cysteine 2167, cysteine 2179, and cysteine 2181 together coordinate [4Fe-4S] cluster. The short motif at 2164-2181 (CSRCHKVKRDYMSAHCPC) is the CysB motif element.

This sequence belongs to the DNA polymerase type-B family. In terms of assembly, DNA polymerase epsilon is a heterotetramer consisting of POL2, DPB2, DPB3 and DPB4. The cofactor is [4Fe-4S] cluster.

The protein localises to the nucleus. The catalysed reaction is DNA(n) + a 2'-deoxyribonucleoside 5'-triphosphate = DNA(n+1) + diphosphate. Catalytic component of the DNA polymerase epsilon complex which participates in chromosomal DNA replication. Required during synthesis of the leading DNA strands at the replication fork, binds at/or near replication origins and moves along DNA with the replication fork. Has 3'-5' proofreading exonuclease activity that corrects errors arising during DNA replication. This chain is DNA polymerase epsilon catalytic subunit A (POL2), found in Saccharomyces cerevisiae (strain ATCC 204508 / S288c) (Baker's yeast).